An 83-amino-acid chain; its full sequence is Large ribosomal subunit protein bL27 (83 aa).

Positions 1–25 (MAHKKGQGASRNGRDSESKRLGLKV) are disordered.

Belongs to the bacterial ribosomal protein bL27 family.

The protein is Large ribosomal subunit protein bL27 of Chlamydia trachomatis serovar L2 (strain ATCC VR-902B / DSM 19102 / 434/Bu).